The sequence spans 529 residues: DEP domain-containing protein 1B (529 aa).

Positions 24 to 108 constitute a DEP domain; sequence FRAGMPLRKH…DDGHLYRFPP (85 aa). Positions 192-393 constitute a Rho-GAP domain; sequence ARLQKVLGLD…FLMDNYQEIL (202 aa).

The protein is DEP domain-containing protein 1B (DEPDC1B) of Gallus gallus (Chicken).